A 632-amino-acid chain; its full sequence is MAU2 chromatid cohesion factor homolog (632 aa).

2 TPR repeats span residues Gly453–Glu486 and Ser493–Ile526.

This sequence belongs to the SCC4/mau-2 family. In terms of assembly, interacts with Nipped-B to form the cohesin loading complex.

It is found in the nucleus. It localises to the nucleoplasm. Required for association of the cohesin complex with chromatin during interphase. Plays a role in sister chromatid cohesion and normal progression through prometaphase. This Drosophila sechellia (Fruit fly) protein is MAU2 chromatid cohesion factor homolog.